Reading from the N-terminus, the 521-residue chain is Cell cycle checkpoint protein hpr-9 (521 aa).

Disordered regions lie at residues 1–20, 318–375, and 492–521; these read MQAIHENYTDNPSSSITRER, QHEE…NRFV, and GTETTSKMRMSQQFDKRLGPLVSDTQYESR. Polar residues-rich tracts occupy residues 355–370 and 493–504; these read ESLSQEETTRSQSLPS and TETTSKMRMSQQ.

This sequence belongs to the rad9 family. In terms of assembly, putative component of the toroidal 9-1-1 (RAD9-RAD1-HUS1) complex, composed of hpr-9, mrt-2 and hus-1.

Its function is as follows. May be a component of the 9-1-1 cell-cycle checkpoint response complex that plays a major role in DNA repair. The sequence is that of Cell cycle checkpoint protein hpr-9 from Caenorhabditis elegans.